The primary structure comprises 185 residues: Calcium and integrin-binding family member 4 (185 aa).

3 EF-hand domains span residues 62 to 95 (RVNP…FSEQ), 97 to 132 (CPSL…LLKS), and 138 to 174 (DLLM…SPDF). The Ca(2+) site is built by Asp-110, Asn-112, Asn-114, and Asp-121.

In terms of assembly, interacts with ITGA2B (via C-terminus cytoplasmic tail region); the interaction is stabilized/increased in a calcium- and magnesium-dependent manner. Expressed weakly in megakaryocytes and endothelial cells.

The chain is Calcium and integrin-binding family member 4 (Cib4) from Mus musculus (Mouse).